The following is a 292-amino-acid chain: Ribonuclease T2-like (292 aa).

The N-terminal stretch at 1–23 (MAKTASAMLFLYLLLSRCLLSHA) is a signal peptide. 5 disulfides stabilise this stretch: Cys-42/Cys-61, Cys-50/Cys-103, Cys-60/Cys-177, Cys-111/Cys-169, and Cys-246/Cys-280. The N-linked (GlcNAc...) asparagine glycan is linked to Asn-52. Active-site residues include His-96, Glu-162, and His-166.

It belongs to the RNase T2 family.

It localises to the vacuole lumen. The protein localises to the cytoplasm. The catalysed reaction is a ribonucleotidyl-ribonucleotide-RNA + H2O = a 3'-end 3'-phospho-ribonucleotide-RNA + a 5'-end dephospho-ribonucleoside-RNA + H(+). In terms of biological role, rnase which modulates cell survival under stress conditions. Released from the vacuole to the cytoplasm during stress to promote tRNA and rRNA cleavage and to activate separately a downstream pathway that promotes cell death. Involved in cell size, vacuolar morphology and growth at high temperatures and high salt concentration. This Eremothecium gossypii (strain ATCC 10895 / CBS 109.51 / FGSC 9923 / NRRL Y-1056) (Yeast) protein is Ribonuclease T2-like (RNY1).